The sequence spans 301 residues: NADH-ubiquinone oxidoreductase chain 1 (301 aa).

Transmembrane regions (helical) follow at residues 4–24 (IIPI…VLGY), 62–82 (LALF…MWIP), 96–116 (ILFM…SGWA), 140–160 (LAII…STLI), 165–185 (YTWL…STIA), 216–236 (LFFL…IILF), 247–267 (EMYT…FLWI), and 279–299 (LMHL…MWHV).

This sequence belongs to the complex I subunit 1 family.

The protein resides in the mitochondrion inner membrane. It carries out the reaction a ubiquinone + NADH + 5 H(+)(in) = a ubiquinol + NAD(+) + 4 H(+)(out). Functionally, core subunit of the mitochondrial membrane respiratory chain NADH dehydrogenase (Complex I) that is believed to belong to the minimal assembly required for catalysis. Complex I functions in the transfer of electrons from NADH to the respiratory chain. The immediate electron acceptor for the enzyme is believed to be ubiquinone. The sequence is that of NADH-ubiquinone oxidoreductase chain 1 (MT-ND1) from Nyctalus noctula (Noctule bat).